Here is a 727-residue protein sequence, read N- to C-terminus: Polyribonucleotide nucleotidyltransferase (727 aa).

Residues D488 and D494 each contribute to the Mg(2+) site. A KH domain is found at 555–614; sequence PKLYTMKINPEKIRDVIGKGGATIRALTDETGCQINIEEDGTITIAATEAAKADEAKRRI. One can recognise an S1 motif domain in the interval 624–692; sequence GKVYEGPVTK…DKGRVKLSMK (69 aa). The disordered stretch occupies residues 691-727; sequence MKALADRPAGDSGRPAPAERGERRERRDGGASEQQQQ. The segment covering 707–720 has biased composition (basic and acidic residues); the sequence is PAERGERRERRDGG.

Belongs to the polyribonucleotide nucleotidyltransferase family. The cofactor is Mg(2+).

The protein localises to the cytoplasm. It carries out the reaction RNA(n+1) + phosphate = RNA(n) + a ribonucleoside 5'-diphosphate. Involved in mRNA degradation. Catalyzes the phosphorolysis of single-stranded polyribonucleotides processively in the 3'- to 5'-direction. In Acidovorax ebreus (strain TPSY) (Diaphorobacter sp. (strain TPSY)), this protein is Polyribonucleotide nucleotidyltransferase.